The chain runs to 112 residues: Large ribosomal subunit protein P2 (112 aa).

The interval 81-112 (VETAEAKKEDKKEEKKEEEEEEEDDLGFSLFG) is disordered. Residues 84–95 (AEAKKEDKKEEK) show a composition bias toward basic and acidic residues. Residues 96–106 (KEEEEEEEDDL) are compositionally biased toward acidic residues.

Belongs to the eukaryotic ribosomal protein P1/P2 family. P1 and P2 exist as dimers at the large ribosomal subunit. In terms of processing, phosphorylated.

Functionally, plays an important role in the elongation step of protein synthesis. This is Large ribosomal subunit protein P2 (MAL3P3.19) from Plasmodium falciparum (isolate 3D7).